The chain runs to 461 residues: MSRPKNQNYKGHGLQKGKEREQRASIRFKTTLMNTLMDVLRHRPGWVEVKDEGEWDFYWCDVSWLRENFDHTYMGEHVRISHFRNHYELTRKNYMVKNLKRFRKQLEREAGKLEAAKCDFFPKTFEMPCEYHLFVEEFRKNPGITWIMKPVARSQGKGIFLFRRLKDIMDWKKGTAGKKLTSLEAQPARNTVNPSGSHDTRSSDDQKDEIPVENYVAQRYIENPYLIGGRKFDLRVYVLVMSYIPLRAWLYRDGFARFSNTRFTLNSIDDQYVHLTNVAVQKTSPDYHPKKGCKWMLQRFRQYLASKHGPEAVETLFSDMDNIFIRSLQSVQKVIISDKHCFELYGYDILIDQDLKPWLLEVNASPSLTASSQEDYELKTCLLEDTLHIVDMEARLTGREKRVGGFDLMWNDGPVSREEGGPDLSGMGNFVTNTHLGCVNDRKEQLRQLFRSLQGQKKTPN.

The interval 1 to 21 (MSRPKNQNYKGHGLQKGKERE) is disordered. The TTL domain maps to 22-402 (QRASIRFKTT…EARLTGREKR (381 aa)). Residues K149 and 155–156 (QG) each bind ATP. Q155 contributes to the a protein binding site. The segment at 182-208 (SLEAQPARNTVNPSGSHDTRSSDDQKD) is disordered. The span at 188-197 (ARNTVNPSGS) shows a compositional bias: polar residues. The span at 198–208 (HDTRSSDDQKD) shows a compositional bias: basic and acidic residues. ATP is bound by residues 218–221 (QRYI) and 231–233 (KFD). Residue R257 participates in L-glutamate binding. ATP is bound at residue 276 to 277 (TN). K294 serves as a coordination point for L-glutamate. Positions 348, 361, and 363 each coordinate Mg(2+). K379 is an L-glutamate binding site.

The protein belongs to the tubulin--tyrosine ligase family. Mg(2+) is required as a cofactor.

It localises to the cytoplasm. The protein resides in the cytoskeleton. It is found in the cilium basal body. Its subcellular location is the flagellum axoneme. The catalysed reaction is (L-glutamyl)(n)-gamma-L-glutamyl-L-glutamyl-[protein] + L-glutamate + ATP = (L-glutamyl)(n+1)-gamma-L-glutamyl-L-glutamyl-[protein] + ADP + phosphate + H(+). Probable tubulin polyglutamylase that generates side chains of glutamate on the gamma-carboxyl group of specific glutamate residues within the C-terminal tail of target proteins. Similar to TTLL1, may acquire enzymatic activity only in complex with other proteins as it is most likely lacking domains important for autonomous activity. Mediates tubulin polyglutamylation which induces establishment of microtubule heterogeneity in sperm flagella, thereby playing a role in normal motile flagella axoneme structure and sperm flagella beating pattern. This Bos taurus (Bovine) protein is Probable tubulin polyglutamylase TTLL9 (TTLL9).